Reading from the N-terminus, the 426-residue chain is GATA type zinc finger protein asd-4 (426 aa).

The GATA-type zinc finger occupies 16–40 (CQNCATSTTPLWRRDEMGQVLCNAC). 2 disordered regions span residues 70–143 (RPDL…NPHI) and 159–178 (PGFG…MNGE). Positions 104–113 (PNNPAAAARR) are enriched in low complexity. The segment covering 128–138 (SPVSRTGTPNV) has biased composition (polar residues). A coiled-coil region spans residues 182-292 (QTHEQLLAAN…QDNGRHKKIR (111 aa)). A compositionally biased stretch (low complexity) spans 306-318 (VEPQQPEQQQPAP). The disordered stretch occupies residues 306-426 (VEPQQPEQQQ…PVEEAPKAES (121 aa)). The segment covering 335–353 (APAPAPEAAPEQAPAPAPE) has biased composition (pro residues). A compositionally biased stretch (low complexity) spans 354–419 (PVQEQAQEPE…SEPPTTAPVE (66 aa)).

In terms of assembly, homotetramer.

The protein resides in the nucleus. Functionally, transcriptional regulator that functions in sexual development; disruption of asd-4 gene results in agenesis of ascus and ascospore with macroscopically normal fruiting body formation. The GATA-type zinc finger domain binds to DNA sequences from its own promoter region. This Neurospora crassa (strain ATCC 24698 / 74-OR23-1A / CBS 708.71 / DSM 1257 / FGSC 987) protein is GATA type zinc finger protein asd-4 (asd-4).